The primary structure comprises 309 residues: MKDILIIAGPTAVGKTDISIKIAQKMNGEIISADSMQIYKYMDIGSAKVTKEEMKGIKHHLIDVVDPSEEFSVASFKKMAQNAIDDITSRKKYPIIVGGTGLYINSLICNYDFTGAYKDEAYRESLQAIAKDKGKEYLHEKLKNIDIDSYKKLYPNDLKRVIRALEVYKITGKTISELNSNVDLYDIPYNIHYFILNMDRQKLYERINLRVDIMLRNGLVDEVIKLRDMGYNSNMQSMKGIGYKEILSYLEGCITLEEAVELIKKGSRHYAKRQLTWFRKDERAVWINKDIYKNDDDIVFKILSSIEEI.

9–16 (GPTAVGKT) lines the ATP pocket. 11–16 (TAVGKT) serves as a coordination point for substrate. The tract at residues 34–37 (DSMQ) is interaction with substrate tRNA.

Belongs to the IPP transferase family. Monomer. The cofactor is Mg(2+).

The enzyme catalyses adenosine(37) in tRNA + dimethylallyl diphosphate = N(6)-dimethylallyladenosine(37) in tRNA + diphosphate. Catalyzes the transfer of a dimethylallyl group onto the adenine at position 37 in tRNAs that read codons beginning with uridine, leading to the formation of N6-(dimethylallyl)adenosine (i(6)A). This chain is tRNA dimethylallyltransferase, found in Clostridium acetobutylicum (strain ATCC 824 / DSM 792 / JCM 1419 / IAM 19013 / LMG 5710 / NBRC 13948 / NRRL B-527 / VKM B-1787 / 2291 / W).